Reading from the N-terminus, the 298-residue chain is Myozenin-1 (298 aa).

Positions 1-34 (MPLSGTPAPNKKRKSSKLIMELTGGGQESSGLNL) are disordered. The residue at position 82 (Ser-82) is a Phosphoserine. The disordered stretch occupies residues 105 to 173 (FSYSKGSSGG…TGTGDQAGGE (69 aa)). A compositionally biased stretch (low complexity) spans 118–129 (GSSSAGQYGSGQ). A compositionally biased stretch (gly residues) spans 136 to 172 (SGSGSGGAGGPGSQTGRGGDAGTTGVGETGTGDQAGG).

Belongs to the myozenin family. In terms of assembly, interacts with ACTN2, ACTN3, FLNA, FLNB, FLNC, LDB3, PPP3CA and TCAP. Interacts via its C-terminal region with MYOT.

The protein localises to the nucleus. The protein resides in the cell projection. Its subcellular location is the pseudopodium. In terms of biological role, myozenins may serve as intracellular binding proteins involved in linking Z-disk proteins such as alpha-actinin, gamma-filamin, TCAP/telethonin, LDB3/ZASP and localizing calcineurin signaling to the sarcomere. Plays an important role in the modulation of calcineurin signaling. May play a role in myofibrillogenesis. This chain is Myozenin-1 (MYOZ1), found in Sus scrofa (Pig).